The following is a 375-amino-acid chain: Succinyl-diaminopimelate desuccinylase (375 aa).

His-66 is a binding site for Zn(2+). Residue Asp-68 is part of the active site. Asp-99 serves as a coordination point for Zn(2+). Glu-133 acts as the Proton acceptor in catalysis. Zn(2+) contacts are provided by Glu-134, Glu-162, and His-348.

This sequence belongs to the peptidase M20A family. DapE subfamily. In terms of assembly, homodimer. It depends on Zn(2+) as a cofactor. Co(2+) serves as cofactor.

It catalyses the reaction N-succinyl-(2S,6S)-2,6-diaminopimelate + H2O = (2S,6S)-2,6-diaminopimelate + succinate. Its pathway is amino-acid biosynthesis; L-lysine biosynthesis via DAP pathway; LL-2,6-diaminopimelate from (S)-tetrahydrodipicolinate (succinylase route): step 3/3. Its function is as follows. Catalyzes the hydrolysis of N-succinyl-L,L-diaminopimelic acid (SDAP), forming succinate and LL-2,6-diaminopimelate (DAP), an intermediate involved in the bacterial biosynthesis of lysine and meso-diaminopimelic acid, an essential component of bacterial cell walls. The protein is Succinyl-diaminopimelate desuccinylase of Methylobacillus flagellatus (strain ATCC 51484 / DSM 6875 / VKM B-1610 / KT).